The chain runs to 79 residues: Small ribosomal subunit protein bS20 (79 aa).

It belongs to the bacterial ribosomal protein bS20 family.

Functionally, binds directly to 16S ribosomal RNA. The sequence is that of Small ribosomal subunit protein bS20 from Karelsulcia muelleri (strain GWSS) (Sulcia muelleri).